A 102-amino-acid chain; its full sequence is Nuclear protein 2 (102 aa).

Disordered regions lie at residues 1–26 (MDPPTRPSVSGPRTRARPPPPEALPT) and 46–102 (PASG…TRLA). The span at 85–102 (QRKRRQRQLQPRPRTRLA) shows a compositional bias: basic residues.

It belongs to the NUPR family.

The protein resides in the nucleus. Functionally, acts as a transcriptional repressor by inhibiting gene expression at the NUPR1 promoter in a p53/TP53-dependent manner in cancer cells. Involved in the G1 cell cycle arrest, and in a decrease in cell viability and cell proliferation of pancreatic cancer cells. Plays a role as a negative regulator of the protumoral factor NUPR1. The sequence is that of Nuclear protein 2 from Mus musculus (Mouse).